A 1112-amino-acid chain; its full sequence is Carbamoyl phosphate synthase large chain (1112 aa).

Residues 1–407 form a carboxyphosphate synthetic domain region; sequence MPRRTDLRHV…ALGKVMRSLE (407 aa). 12 residues coordinate ATP: R134, R174, G180, G181, E213, I215, E220, G246, V247, H248, Q290, and E304. The ATP-grasp 1 domain maps to 138 to 333; that stretch reads KDIVTKVGGE…IAKIAAKLAI (196 aa). Positions 290, 304, and 306 each coordinate Mg(2+). Mn(2+) contacts are provided by Q290, E304, and N306. Positions 408–559 are oligomerization domain; the sequence is TGRAGFWTAP…ELDPAAESEV (152 aa). Residues 560-965 form a carbamoyl phosphate synthetic domain region; that stretch reads APQAERPKVL…AFAKSQTAAY (406 aa). An ATP-grasp 2 domain is found at 693 to 884; the sequence is GEVLRTAGLP…LAKACARIML (192 aa). Residues R729, R768, L770, E775, G800, I801, H802, S803, Q843, and E855 each contribute to the ATP site. Mg(2+) contacts are provided by Q843, E855, and N857. Mn(2+)-binding residues include Q843, E855, and N857. Residues 966–1112 form the MGS-like domain; sequence GSLPSEGTVF…LQELHSELGN (147 aa). The tract at residues 966 to 1112 is allosteric domain; sequence GSLPSEGTVF…LQELHSELGN (147 aa).

It belongs to the CarB family. Composed of two chains; the small (or glutamine) chain promotes the hydrolysis of glutamine to ammonia, which is used by the large (or ammonia) chain to synthesize carbamoyl phosphate. Tetramer of heterodimers (alpha,beta)4. It depends on Mg(2+) as a cofactor. The cofactor is Mn(2+).

It catalyses the reaction hydrogencarbonate + L-glutamine + 2 ATP + H2O = carbamoyl phosphate + L-glutamate + 2 ADP + phosphate + 2 H(+). The catalysed reaction is hydrogencarbonate + NH4(+) + 2 ATP = carbamoyl phosphate + 2 ADP + phosphate + 2 H(+). Its pathway is amino-acid biosynthesis; L-arginine biosynthesis; carbamoyl phosphate from bicarbonate: step 1/1. The protein operates within pyrimidine metabolism; UMP biosynthesis via de novo pathway; (S)-dihydroorotate from bicarbonate: step 1/3. Its function is as follows. Large subunit of the glutamine-dependent carbamoyl phosphate synthetase (CPSase). CPSase catalyzes the formation of carbamoyl phosphate from the ammonia moiety of glutamine, carbonate, and phosphate donated by ATP, constituting the first step of 2 biosynthetic pathways, one leading to arginine and/or urea and the other to pyrimidine nucleotides. The large subunit (synthetase) binds the substrates ammonia (free or transferred from glutamine from the small subunit), hydrogencarbonate and ATP and carries out an ATP-coupled ligase reaction, activating hydrogencarbonate by forming carboxy phosphate which reacts with ammonia to form carbamoyl phosphate. The chain is Carbamoyl phosphate synthase large chain from Mycobacterium sp. (strain JLS).